Here is a 192-residue protein sequence, read N- to C-terminus: LOB domain-containing protein 32 (192 aa).

Residues 4–105 (NRCAVCKILN…QDIESAVNEL (102 aa)) enclose the LOB domain.

Belongs to the LOB domain-containing protein family.

The protein is LOB domain-containing protein 32 (LBD32) of Arabidopsis thaliana (Mouse-ear cress).